We begin with the raw amino-acid sequence, 504 residues long: Maturase K (504 aa).

This sequence belongs to the intron maturase 2 family. MatK subfamily.

The protein resides in the plastid. Its subcellular location is the chloroplast. Its function is as follows. Usually encoded in the trnK tRNA gene intron. Probably assists in splicing its own and other chloroplast group II introns. The chain is Maturase K from Berzelia lanuginosa (Buttonbush).